We begin with the raw amino-acid sequence, 307 residues long: Aspartate carbamoyltransferase catalytic subunit (307 aa).

2 residues coordinate carbamoyl phosphate: arginine 59 and threonine 60. An L-aspartate-binding site is contributed by lysine 87. Carbamoyl phosphate is bound by residues arginine 109, histidine 137, and glutamine 140. 2 residues coordinate L-aspartate: arginine 173 and arginine 223. Residues glycine 266 and proline 267 each contribute to the carbamoyl phosphate site.

Belongs to the aspartate/ornithine carbamoyltransferase superfamily. ATCase family. In terms of assembly, heterododecamer (2C3:3R2) of six catalytic PyrB chains organized as two trimers (C3), and six regulatory PyrI chains organized as three dimers (R2).

The enzyme catalyses carbamoyl phosphate + L-aspartate = N-carbamoyl-L-aspartate + phosphate + H(+). It participates in pyrimidine metabolism; UMP biosynthesis via de novo pathway; (S)-dihydroorotate from bicarbonate: step 2/3. Catalyzes the condensation of carbamoyl phosphate and aspartate to form carbamoyl aspartate and inorganic phosphate, the committed step in the de novo pyrimidine nucleotide biosynthesis pathway. The sequence is that of Aspartate carbamoyltransferase catalytic subunit from Helicobacter pylori (strain Shi470).